The following is a 181-amino-acid chain: uncharacterized protein (181 aa).

A run of 2 helical transmembrane segments spans residues 24 to 46 and 55 to 77; these read IAAV…LLNV and GIVA…YILL.

It localises to the cell membrane. This is an uncharacterized protein from Archaeoglobus fulgidus (strain ATCC 49558 / DSM 4304 / JCM 9628 / NBRC 100126 / VC-16).